Reading from the N-terminus, the 358-residue chain is DNA polymerase IV (358 aa).

One can recognise a UmuC domain in the interval 4–185 (IIHIDMDCYF…LPLIKIPGVG (182 aa)). Residues aspartate 8 and aspartate 103 each coordinate Mg(2+). Glutamate 104 is a catalytic residue.

This sequence belongs to the DNA polymerase type-Y family. Monomer. Mg(2+) is required as a cofactor.

The protein localises to the cytoplasm. It carries out the reaction DNA(n) + a 2'-deoxyribonucleoside 5'-triphosphate = DNA(n+1) + diphosphate. In terms of biological role, poorly processive, error-prone DNA polymerase involved in untargeted mutagenesis. Copies undamaged DNA at stalled replication forks, which arise in vivo from mismatched or misaligned primer ends. These misaligned primers can be extended by PolIV. Exhibits no 3'-5' exonuclease (proofreading) activity. May be involved in translesional synthesis, in conjunction with the beta clamp from PolIII. In Shewanella denitrificans (strain OS217 / ATCC BAA-1090 / DSM 15013), this protein is DNA polymerase IV.